The chain runs to 411 residues: ATP phosphoribosyltransferase 1, chloroplastic (411 aa).

Residues 1 to 12 (MSLLLPTNLQQY) show a composition bias toward polar residues. Positions 1-27 (MSLLLPTNLQQYPSSSSFPSSTPILSP) are disordered. Residues 1–49 (MSLLLPTNLQQYPSSSSFPSSTPILSPPPSTAFSVIVPRRRCLRLVTSC) constitute a chloroplast transit peptide. A compositionally biased stretch (low complexity) spans 13–24 (PSSSSFPSSTPI). V50 is modified (N-acetylvaline).

This sequence belongs to the ATP phosphoribosyltransferase family. Long subfamily. The cofactor is Mg(2+). As to expression, expressed in leaves and at lower levels in roots (at protein level).

Its subcellular location is the plastid. It localises to the chloroplast. The catalysed reaction is 1-(5-phospho-beta-D-ribosyl)-ATP + diphosphate = 5-phospho-alpha-D-ribose 1-diphosphate + ATP. It participates in amino-acid biosynthesis; L-histidine biosynthesis; L-histidine from 5-phospho-alpha-D-ribose 1-diphosphate: step 1/9. Feedback inhibited by L-histidine. Catalyzes the condensation of ATP and 5-phosphoribose 1-diphosphate to form N'-(5'-phosphoribosyl)-ATP (PR-ATP). This chain is ATP phosphoribosyltransferase 1, chloroplastic (HISN1A), found in Arabidopsis thaliana (Mouse-ear cress).